A 189-amino-acid chain; its full sequence is UPF0312 protein VIBHAR_05924 (189 aa).

An N-terminal signal peptide occupies residues 1–22 (MKKSLFATGLAIAIALPFGANA).

It belongs to the UPF0312 family. Type 1 subfamily.

It is found in the periplasm. In Vibrio campbellii (strain ATCC BAA-1116), this protein is UPF0312 protein VIBHAR_05924.